A 69-amino-acid polypeptide reads, in one-letter code: Large ribosomal subunit protein bL31 (69 aa).

Zn(2+)-binding residues include cysteine 16, cysteine 18, cysteine 36, and cysteine 39.

Belongs to the bacterial ribosomal protein bL31 family. Type A subfamily. As to quaternary structure, part of the 50S ribosomal subunit. The cofactor is Zn(2+).

Binds the 23S rRNA. This is Large ribosomal subunit protein bL31 from Thermosipho africanus (strain TCF52B).